The sequence spans 282 residues: Dihydropteroate synthase (282 aa).

One can recognise a Pterin-binding domain in the interval 15–267 (PHVMGILNVT…DVKETVEAMR (253 aa)). Asn22 contacts Mg(2+). (7,8-dihydropterin-6-yl)methyl diphosphate-binding positions include Thr62, Asp96, Asn115, Asp185, Lys221, and 255-257 (RVH).

This sequence belongs to the DHPS family. Homodimer. The cofactor is Mg(2+).

The catalysed reaction is (7,8-dihydropterin-6-yl)methyl diphosphate + 4-aminobenzoate = 7,8-dihydropteroate + diphosphate. Its pathway is cofactor biosynthesis; tetrahydrofolate biosynthesis; 7,8-dihydrofolate from 2-amino-4-hydroxy-6-hydroxymethyl-7,8-dihydropteridine diphosphate and 4-aminobenzoate: step 1/2. Catalyzes the condensation of para-aminobenzoate (pABA) with 6-hydroxymethyl-7,8-dihydropterin diphosphate (DHPt-PP) to form 7,8-dihydropteroate (H2Pte), the immediate precursor of folate derivatives. This chain is Dihydropteroate synthase (folP), found in Shigella flexneri.